The following is a 266-amino-acid chain: Single-stranded DNA-binding protein WHY1, chloroplastic (266 aa).

The N-terminal 37 residues, 1–37 (MPPPAPLFLSLASTPPPALMPVHHPRAPQSLTLVPPV), are a transit peptide targeting the chloroplast. The interval 53 to 81 (SPRHSDYFDPRAPPPPRGDGGYGRPPNGA) is disordered. The tract at residues 94 to 99 (KGKAAL) is required for ssDNA binding. Residues 172-185 (KGRSEEGKVRKVLK) carry the Nuclear localization signal motif.

This sequence belongs to the Whirly family. As to quaternary structure, homotetramer.

The protein resides in the plastid. It is found in the chloroplast stroma. The protein localises to the nucleus. Functionally, single-stranded DNA and RNA binding protein that maintains plastid genome stability by preventing break-induced and short homology-dependent illegitimate recombinations. Functions in RNA metabolism and is involved in the maturation of the atpF and 23S ribosomal RNAs. This is Single-stranded DNA-binding protein WHY1, chloroplastic (WHY1) from Zea mays (Maize).